Consider the following 708-residue polypeptide: MSLFNVFRKEIEWGGRKLVLETGRIARQADGAVMASLGDTTVLCTAVGAKTKSKFDFFPLTVNYQEKTFAAGKIPGGFFKREGRPSEKETLVSRLIDRPIRPLFVHGYKNETQLVCTVLCHDLENNPDIVAIVGASAALTLSGLPFLGPIGAARVGLIDGAFVLNPTRDQMADSVLDLVVAGTREGVLMVESEAHELSEQQMLDAVMFGHEGYQPVIDAIIALAEQCAREPRAIEPPAPEAEAVAAKVREVGEAGLRDAYKEADKMVRHDKVDAVRDAVTAAFAGDDAALALAGAAFKDLEKDIVRGSILDTGLRIDGRDTKTVRPIEIYPGILPRAHGSALFTRGETQALVTTTLGTGQDEQIIDALEGEYRENFMLHYNFPPYSVGEAGRMGSPGRREIGHGKLAWRAIHPMMPAKDAFPYTVRVVSEITESNGSSSMATVCGTSLALMDAGVPLKNAVAGIAMGLIKEDERFAVLSDILGDEDHLGDMDFKVAGTANGITSLQMDIKITSITKEIMNVALNQAKDGRIHILGEMTKALGNARSDVSDFAPRITTIKVPPQKVREVIGSGGKVIREITEVTGTKIDIEDDGTIKIASADAEATQRAVDWIKGIVAEPEIGVVYTGKVVKIMDFGAFVNFLGTRDGLVHISELSQDRVKKVGDVVNVGDQVKVKCVGFDDRGKIKLSMKQVDQVTGADLSTQAPAEE.

Asp486 and Asp492 together coordinate Mg(2+). One can recognise a KH domain in the interval Pro553 to Ile612. Positions Gly622 to Lys690 constitute an S1 motif domain.

The protein belongs to the polyribonucleotide nucleotidyltransferase family. The cofactor is Mg(2+).

It is found in the cytoplasm. It carries out the reaction RNA(n+1) + phosphate = RNA(n) + a ribonucleoside 5'-diphosphate. In terms of biological role, involved in mRNA degradation. Catalyzes the phosphorolysis of single-stranded polyribonucleotides processively in the 3'- to 5'-direction. The sequence is that of Polyribonucleotide nucleotidyltransferase from Rhodospirillum rubrum (strain ATCC 11170 / ATH 1.1.1 / DSM 467 / LMG 4362 / NCIMB 8255 / S1).